Reading from the N-terminus, the 302-residue chain is tRNA dimethylallyltransferase 1 (302 aa).

6 to 13 (GPTACGKT) contributes to the ATP binding site. 8–13 (TACGKT) provides a ligand contact to substrate. 2 interaction with substrate tRNA regions span residues 31 to 34 (DSRQ) and 154 to 158 (QRAIR).

The protein belongs to the IPP transferase family. As to quaternary structure, monomer. It depends on Mg(2+) as a cofactor.

It catalyses the reaction adenosine(37) in tRNA + dimethylallyl diphosphate = N(6)-dimethylallyladenosine(37) in tRNA + diphosphate. Its function is as follows. Catalyzes the transfer of a dimethylallyl group onto the adenine at position 37 in tRNAs that read codons beginning with uridine, leading to the formation of N6-(dimethylallyl)adenosine (i(6)A). The sequence is that of tRNA dimethylallyltransferase 1 from Porphyromonas gingivalis (strain ATCC 33277 / DSM 20709 / CIP 103683 / JCM 12257 / NCTC 11834 / 2561).